We begin with the raw amino-acid sequence, 139 residues long: D-ribose pyranase (139 aa).

The active-site Proton donor is histidine 20. Substrate-binding positions include aspartate 28, histidine 106, and 128–130 (YAN).

Belongs to the RbsD / FucU family. RbsD subfamily. Homodecamer.

It is found in the cytoplasm. It catalyses the reaction beta-D-ribopyranose = beta-D-ribofuranose. It participates in carbohydrate metabolism; D-ribose degradation; D-ribose 5-phosphate from beta-D-ribopyranose: step 1/2. In terms of biological role, catalyzes the interconversion of beta-pyran and beta-furan forms of D-ribose. The sequence is that of D-ribose pyranase from Citrobacter koseri (strain ATCC BAA-895 / CDC 4225-83 / SGSC4696).